A 595-amino-acid polypeptide reads, in one-letter code: Parathyroid hormone/parathyroid hormone-related peptide receptor (595 aa).

The N-terminal stretch at 1–28 (MGAVRIAPGLALLLCCPVLSSAYALVDA) is a signal peptide. Residues 29–188 (DDVMTKEEQI…REREVFDRLG (160 aa)) lie on the Extracellular side of the membrane. 3 disulfide bridges follow: Cys-48/Cys-117, Cys-108/Cys-148, and Cys-131/Cys-170. The interval 66–103 (DKGWASASTSGKPKKEKASGKLYPESEEDKEVPTGSRH) is disordered. Residues Asn-151, Asn-161, Asn-166, and Asn-176 are each glycosylated (N-linked (GlcNAc...) asparagine). Residues 189–209 (MIYTVGYSVSLASLTVAVLIL) form a helical membrane-spanning segment. The Cytoplasmic portion of the chain corresponds to 210 to 223 (AYFRRLHCTRNYIH). A helical membrane pass occupies residues 224–244 (MHLFLSFMLRAVSIFVKDAVL). Residues 245 to 294 (YSGATLDEAERLTEEELRAIAQAPPPPTAAAGYAGCRVAVTFFLYFLATN) lie on the Extracellular side of the membrane. Residues 295–315 (YYWILVEGLYLHSLIFMAFFS) traverse the membrane as a helical segment. Topologically, residues 316–318 (EKK) are cytoplasmic. Residues 319–339 (YLWGFTVFGWGLPAVFVAVWV) traverse the membrane as a helical segment. The Extracellular portion of the chain corresponds to 340–360 (SVRATLANTGCWDLSSGNKKW). Residues 361–381 (IIQVPILASIVLNFILFINIV) traverse the membrane as a helical segment. Topologically, residues 382–404 (RVLATKLRETNAGRCDTRQQYRK) are cytoplasmic. The helical transmembrane segment at 405 to 425 (LLKSTLVLMPLFGVHYIVFMA) threads the bilayer. The Extracellular portion of the chain corresponds to 426-439 (TPYTEVSGTLWQVQ). A helical transmembrane segment spans residues 440–460 (MHYEMLFNSFQGFFVAIIYCF). Topologically, residues 461–595 (CNGEVQAEIK…LLQEEWETVM (135 aa)) are cytoplasmic. The short motif at 473-476 (WSRW) is the Important for interaction with G proteins element. Residues 528–595 (TTTATTNGHP…LLQEEWETVM (68 aa)) form a disordered region. Positions 547-559 (APTLPATPPATAA) are enriched in low complexity. Position 553 is a phosphothreonine (Thr-553).

The protein belongs to the G-protein coupled receptor 2 family. As to quaternary structure, homodimer in the absence of bound ligand. Peptide hormone binding leads to dissociation of the homodimer. N-glycosylated. In terms of tissue distribution, high levels in the kidney, with much lower levels in aorta, heart, lung, prostate, testis, and skeletal muscle.

It is found in the cell membrane. Its function is as follows. G-protein-coupled receptor for parathyroid hormone (PTH) and for parathyroid hormone-related peptide (PTHLH). Ligand binding causes a conformation change that triggers signaling via guanine nucleotide-binding proteins (G proteins) and modulates the activity of downstream effectors, such as adenylate cyclase (cAMP). PTH1R is coupled to G(s) G alpha proteins and mediates activation of adenylate cyclase activity. PTHLH dissociates from PTH1R more rapidly than PTH; as consequence, the cAMP response induced by PTHLH decays faster than the response induced by PTH. The polypeptide is Parathyroid hormone/parathyroid hormone-related peptide receptor (PTH1R) (Canis lupus familiaris (Dog)).